Here is a 111-residue protein sequence, read N- to C-terminus: MSFSECPLVISACKKFLQKRITIENEALINALITALAQTTTLNDLCLLPIQTYLLSYKNAFEWIHFVCIAITTILDSKYNWKDCTVDINYIFLHVTYIYNIKTKEYLDYCS.

It belongs to the asfivirus E111R family.

This is an uncharacterized protein from Ornithodoros (relapsing fever ticks).